Consider the following 358-residue polypeptide: Magnesium-protoporphyrin IX monomethyl ester [oxidative] cyclase 2 (358 aa).

It belongs to the AcsF family. It depends on Fe cation as a cofactor.

It carries out the reaction Mg-protoporphyrin IX 13-monomethyl ester + 3 NADPH + 3 O2 + 2 H(+) = 3,8-divinyl protochlorophyllide a + 3 NADP(+) + 5 H2O. It participates in porphyrin-containing compound metabolism; chlorophyll biosynthesis (light-independent). Catalyzes the formation of the isocyclic ring in chlorophyll biosynthesis. Mediates the cyclase reaction, which results in the formation of divinylprotochlorophyllide (Pchlide) characteristic of all chlorophylls from magnesium-protoporphyrin IX 13-monomethyl ester (MgPMME). This Nostoc sp. (strain PCC 7120 / SAG 25.82 / UTEX 2576) protein is Magnesium-protoporphyrin IX monomethyl ester [oxidative] cyclase 2.